The primary structure comprises 223 residues: Ribose-5-phosphate isomerase A (223 aa).

Substrate contacts are provided by residues 28-31 (TGTT), 81-84 (DSAD), and 94-97 (KGGG). Glu103 (proton acceptor) is an active-site residue. Lys121 contributes to the substrate binding site.

Belongs to the ribose 5-phosphate isomerase family. In terms of assembly, homodimer.

The catalysed reaction is aldehydo-D-ribose 5-phosphate = D-ribulose 5-phosphate. It functions in the pathway carbohydrate degradation; pentose phosphate pathway; D-ribose 5-phosphate from D-ribulose 5-phosphate (non-oxidative stage): step 1/1. In terms of biological role, catalyzes the reversible conversion of ribose-5-phosphate to ribulose 5-phosphate. This Buchnera aphidicola subsp. Acyrthosiphon pisum (strain 5A) protein is Ribose-5-phosphate isomerase A.